The chain runs to 510 residues: Flavonoid 3',5'-hydroxylase (510 aa).

Residue C447 coordinates heme.

The protein belongs to the cytochrome P450 family. Requires heme as cofactor.

The enzyme catalyses a 3',5'-unsubstituted flavanone + 2 reduced [NADPH--hemoprotein reductase] + 2 O2 = a 3',5'-dihydroxyflavanone + 2 oxidized [NADPH--hemoprotein reductase] + 2 H2O + 2 H(+). Its pathway is pigment biosynthesis; anthocyanin biosynthesis. Functionally, catalyzes the 3'5'-hydroxylation of naringenin and eriodictyol to form 5,7,3,'4',5'-pentahydroxyflavanone and 3',5'-hydroxylation of dihydrokaempferol and dihydroquercetin to form dihydromyricetin. The polypeptide is Flavonoid 3',5'-hydroxylase (CYP75A5) (Eustoma exaltatum subsp. russellianum (Bluebells)).